We begin with the raw amino-acid sequence, 447 residues long: Phosphoglucosamine mutase (447 aa).

Serine 108 serves as the catalytic Phosphoserine intermediate. Mg(2+) contacts are provided by serine 108, aspartate 247, aspartate 249, and aspartate 251. Serine 108 is subject to Phosphoserine.

It belongs to the phosphohexose mutase family. It depends on Mg(2+) as a cofactor. Activated by phosphorylation.

It carries out the reaction alpha-D-glucosamine 1-phosphate = D-glucosamine 6-phosphate. Its function is as follows. Catalyzes the conversion of glucosamine-6-phosphate to glucosamine-1-phosphate. This chain is Phosphoglucosamine mutase, found in Bordetella petrii (strain ATCC BAA-461 / DSM 12804 / CCUG 43448).